The following is a 199-amino-acid chain: V-type ATP synthase subunit E (199 aa).

Belongs to the V-ATPase E subunit family.

In terms of biological role, produces ATP from ADP in the presence of a proton gradient across the membrane. The protein is V-type ATP synthase subunit E (atpE) of Borreliella burgdorferi (strain ATCC 35210 / DSM 4680 / CIP 102532 / B31) (Borrelia burgdorferi).